The primary structure comprises 203 residues: uncharacterized protein (203 aa).

Helical transmembrane passes span 60–80 (IIDMILGAVTISLVIIVFFLY), 114–134 (WFQLKYLLLVSMTAFSFYFCT), and 157–177 (LQLGWICTTALLFYFYDALIL). Residue 192–199 (GAMSEGKT) coordinates ATP.

It is found in the membrane. This is an uncharacterized protein from Saccharomyces cerevisiae (strain ATCC 204508 / S288c) (Baker's yeast).